The following is a 209-amino-acid chain: Glycerol-3-phosphate acyltransferase (209 aa).

Helical transmembrane passes span 8 to 28, 78 to 98, 124 to 144, 149 to 169, and 170 to 190; these read NVLF…YILA, VLVL…LIGI, VLLV…LIVA, ISSL…FIVH, and PDMP…IIFY.

It belongs to the PlsY family. In terms of assembly, probably interacts with PlsX.

The protein resides in the cell inner membrane. The enzyme catalyses an acyl phosphate + sn-glycerol 3-phosphate = a 1-acyl-sn-glycero-3-phosphate + phosphate. It participates in lipid metabolism; phospholipid metabolism. In terms of biological role, catalyzes the transfer of an acyl group from acyl-phosphate (acyl-PO(4)) to glycerol-3-phosphate (G3P) to form lysophosphatidic acid (LPA). This enzyme utilizes acyl-phosphate as fatty acyl donor, but not acyl-CoA or acyl-ACP. This chain is Glycerol-3-phosphate acyltransferase, found in Nitratiruptor sp. (strain SB155-2).